Consider the following 760-residue polypeptide: Rho GTPase-activating protein 26 (760 aa).

Residues 7 to 262 (EFSECCLDSP…MKENPHEHKN (256 aa)) form the BAR domain. Residues 265-369 (PYTMEGYLYV…WMEAMDGREP (105 aa)) enclose the PH domain. The 186-residue stretch at 383–568 (AQLDSIGFSI…ILIENHEKIF (186 aa)) folds into the Rho-GAP domain. 2 disordered regions span residues 571–617 (VPET…ESRN) and 658–701 (PNRP…SPIS). A compositionally biased stretch (polar residues) spans 605–617 (HTAQPNEKQESRN). Low complexity predominate over residues 674-701 (LSPSWPMFSAPSSPMPTSSTSSDSSPIS). Residues 702-760 (SPLRKARALYACKAEHDSELSFTAGTVFDNVHPSQEPGWLEGTLNGKTGLIPENYVEFL) enclose the SH3 domain.

As to quaternary structure, binds to the C-terminus of PTK2/FAK1. Detected in embryonic brain and liver, and at low levels in embryonic eye, heart, lung, intestine and skeletal muscle.

It localises to the cell junction. Its subcellular location is the focal adhesion. The protein resides in the cytoplasm. It is found in the cytoskeleton. The protein localises to the endosome membrane. Its function is as follows. GTPase-activating protein for RHOA and CDC42. May be involved in the regulation of neosynthesized protein export through a Rab-endososomal dependent export route. This is Rho GTPase-activating protein 26 (ARHGAP26) from Gallus gallus (Chicken).